Here is a 454-residue protein sequence, read N- to C-terminus: MELKPNVKEIPGPKARKVIEEHHKYMATTTNDPNEYFLVIERAEGVYWIDVDGNVLLDFSSGIGVMNVGLRNPKVIEAIKKQLDLVLHAAGTDYYNPYQVELAKKLVEIAPGDIERKVFLSNSGTEANEAALKIAKWSTNRKMFIAFIGAFHGRTHGTMSLTASKPVQRSRMFPTMPGVVHVPYPNPYRNPWGIDGYENPDELINRVIDYIEEYLFEHYVPAEEVAGIFFEPIQGEGGYVVPPKNFFKELKKLADKHGILLIDDEVQMGMGRTGRMWAIEHFDIVPDIVTVAKALGGGIPIGATIFRADLDFGVSGVHSNTFGGNTVAAAAALAVIEELQNGLIENAQKLEPLFRERLEEMKEKYEIIGDVRGLGLAWGVEFVKDRKTKEYATKERGEIVVEALKRGLALLGCGKSAIRLIPPLIISEEEAKMGLDIFEEAIKVVSERHGYKIH.

Glycine 124, threonine 125, and glutamine 267 together coordinate pyridoxal 5'-phosphate. Residue lysine 293 is modified to N6-(pyridoxal phosphate)lysine. Residue threonine 321 coordinates pyridoxal 5'-phosphate.

It belongs to the class-III pyridoxal-phosphate-dependent aminotransferase family. As to quaternary structure, homotetramer; dimer of dimers. The cofactor is pyridoxal 5'-phosphate.

The enzyme catalyses L-ornithine + 2-oxoglutarate = L-glutamate 5-semialdehyde + L-glutamate. It catalyses the reaction L-lysine + 2-oxoglutarate = (S)-2-amino-6-oxohexanoate + L-glutamate. Its function is as follows. Catalyzes the conversion of L-ornithine and 2-oxoglutarate to L-glutamate semialdehyde and L-glutamate. L-ornithine is the best substrate, but the enzyme also shows good activity toward L-lysine, and low activity toward D-ornithine, D-lysine, 5-aminovalerate, 6-aminohexanoate and GABA. The enzyme activity is specific for 2-oxoglutarate. The chain is Ornithine aminotransferase from Pyrococcus horikoshii (strain ATCC 700860 / DSM 12428 / JCM 9974 / NBRC 100139 / OT-3).